The primary structure comprises 314 residues: Bifunctional pinoresinol-lariciresinol reductase 3 (314 aa).

NADP(+) contacts are provided by residues 11–17, arginine 36, and lysine 45; that span reads GGTGFIG. The active-site Proton acceptor is the lysine 138. Arginine 142 contributes to the NADP(+) binding site. Histidine 272 is a binding site for substrate.

The protein belongs to the NmrA-type oxidoreductase family. Isoflavone reductase subfamily. As to quaternary structure, dimer.

The catalysed reaction is (-)-lariciresinol + NADP(+) = (-)-pinoresinol + NADPH + H(+). The enzyme catalyses (+)-secoisolariciresinol + NADP(+) = (-)-lariciresinol + NADPH + H(+). Functionally, reductase involved in lignan biosynthesis. Catalyzes the enantioselective sequential conversion of (-)-pinoresinol into (-)-lariciresinol and of (-)-lariciresinol into (+)-secoisolariciresinol. Abstracts the 4R-hydride from the NADPH cofactor during catalysis. This Thuja plicata (Western red-cedar) protein is Bifunctional pinoresinol-lariciresinol reductase 3.